We begin with the raw amino-acid sequence, 430 residues long: Tol-Pal system protein TolB (430 aa).

Positions 1–21 are cleaved as a signal peptide; that stretch reads MKQAFRVALGFFLLWASVLHA.

It belongs to the TolB family. In terms of assembly, the Tol-Pal system is composed of five core proteins: the inner membrane proteins TolA, TolQ and TolR, the periplasmic protein TolB and the outer membrane protein Pal. They form a network linking the inner and outer membranes and the peptidoglycan layer.

The protein resides in the periplasm. Its function is as follows. Part of the Tol-Pal system, which plays a role in outer membrane invagination during cell division and is important for maintaining outer membrane integrity. TolB occupies a key intermediary position in the Tol-Pal system because it communicates directly with both membrane-embedded components, Pal in the outer membrane and TolA in the inner membrane. This chain is Tol-Pal system protein TolB, found in Sodalis glossinidius (strain morsitans).